The primary structure comprises 384 residues: Prokineticin receptor 2 (384 aa).

The Extracellular portion of the chain corresponds to 1–54 (MAAQNGNTSFTPNFNPPQDHASSLSFNFSYGDYDLPMDEDEDMTKTRTFFAAKI). N-linked (GlcNAc...) asparagine glycosylation is found at Asn7 and Asn27. Residues 55–75 (VIGIALAGIMLVCGIGNFVFI) form a helical membrane-spanning segment. Topologically, residues 76–89 (AALTRYKKLRNLTN) are cytoplasmic. The helical transmembrane segment at 90-110 (LLIANLAISDFLVAIICCPFE) threads the bilayer. Residues 111 to 136 (MDYYVVRQLSWEHGHVLCASVNYLRT) lie on the Extracellular side of the membrane. A disulfide bridge connects residues Cys128 and Cys208. The chain crosses the membrane as a helical span at residues 137–157 (VSLYVSTNALLAIAIDRYLAI). Residues 158–171 (VHPLKPRMNYQTAS) are Cytoplasmic-facing. A helical transmembrane segment spans residues 172–192 (FLIALVWMVSILIAIPSAYFA). At 193–223 (TETVLFIVKSQEKIFCGQIWPVDQQLYYKSY) the chain is on the extracellular side. The helical transmembrane segment at 224–244 (FLFIFGVEFVGPVVTMTLCYA) threads the bilayer. Over 245 to 273 (RISRELWFKAVPGFQTEQIRKRLRCRRKT) the chain is Cytoplasmic. A helical transmembrane segment spans residues 274–294 (VLVLMCILTAYVLCWAPFYGF). At 295-313 (TIVRDFFPTVFVKEKHYLT) the chain is on the extracellular side. Residues 314 to 334 (AFYVVECIAMSNSMINTVCFV) traverse the membrane as a helical segment. Topologically, residues 335–384 (TVKNNTMKYFKKMMLLHWRPSQRGSKSSADLDLRTNGVPTTEEVDCIRLK) are cytoplasmic.

It belongs to the G-protein coupled receptor 1 family. As to quaternary structure, homodimer. As to expression, expressed in the ileocecum, thyroid gland, pituitary gland, salivary gland, adrenal gland, testis, ovary and brain.

Its subcellular location is the cell membrane. Receptor for prokineticin 2. Exclusively coupled to the G(q) subclass of heteromeric G proteins. Activation leads to mobilization of calcium, stimulation of phosphoinositide turnover and activation of p44/p42 mitogen-activated protein kinase. The protein is Prokineticin receptor 2 (PROKR2) of Homo sapiens (Human).